The sequence spans 182 residues: uncharacterized protein (182 aa).

This is an uncharacterized protein from Thermoproteus tenax (TTV1).